Consider the following 109-residue polypeptide: SIAFSRAVLSEFLATLLFVFFGLGSALNWPQALPSVLQIAMAFGLAIGTLVQTLGHISGAHINPAVTIACLVGCHVSFLRALFYLAAQLLGAVAGAALLHELTPPDIRG.

Residues 1–6 (SIAFSR) are Cytoplasmic-facing. A helical transmembrane segment spans residues 7 to 27 (AVLSEFLATLLFVFFGLGSAL). Residues 28–35 (NWPQALPS) are Extracellular-facing. The helical transmembrane segment at 36–54 (VLQIAMAFGLAIGTLVQTL) threads the bilayer. At 55–59 (GHISG) the chain is on the cytoplasmic side. An intramembrane region (discontinuously helical) is located at residues 60–69 (AHINPAVTIA). The NPA 1 motif lies at 63–65 (NPA). Topologically, residues 70 to 80 (CLVGCHVSFLR) are cytoplasmic. The helical transmembrane segment at 81–102 (ALFYLAAQLLGAVAGAALLHEL) threads the bilayer. The Extracellular portion of the chain corresponds to 103–109 (TPPDIRG).

This sequence belongs to the MIP/aquaporin (TC 1.A.8) family. Homotetramer. Post-translationally, serine phosphorylation is necessary and sufficient for expression at the apical membrane. Endocytosis is not phosphorylation-dependent. N-glycosylated.

The protein localises to the apical cell membrane. Its subcellular location is the basolateral cell membrane. It localises to the cell membrane. The protein resides in the cytoplasmic vesicle membrane. It is found in the golgi apparatus. The protein localises to the trans-Golgi network membrane. The enzyme catalyses H2O(in) = H2O(out). The catalysed reaction is glycerol(in) = glycerol(out). Functionally, forms a water-specific channel that provides the plasma membranes of renal collecting duct with high permeability to water, thereby permitting water to move in the direction of an osmotic gradient. Plays an essential role in renal water homeostasis. Could also be permeable to glycerol. This is Aquaporin-2 from Procavia capensis habessinica (Abyssinian hyrax).